A 254-amino-acid chain; its full sequence is uncharacterized protein (254 aa).

5 helical membrane passes run 33-53 (MLWV…LFFI), 70-90 (FNKL…LFKS), 92-112 (FALS…LNFM), 133-153 (FIIF…ILLI), and 223-243 (FLVF…PLIF).

The protein to M.jannaschii MJ0902.

It localises to the cell membrane. This is an uncharacterized protein from Methanocaldococcus jannaschii (strain ATCC 43067 / DSM 2661 / JAL-1 / JCM 10045 / NBRC 100440) (Methanococcus jannaschii).